Reading from the N-terminus, the 334-residue chain is 6-phosphogluconolactonase (334 aa).

It belongs to the cycloisomerase 2 family.

It carries out the reaction 6-phospho-D-glucono-1,5-lactone + H2O = 6-phospho-D-gluconate + H(+). Its pathway is carbohydrate degradation; pentose phosphate pathway; D-ribulose 5-phosphate from D-glucose 6-phosphate (oxidative stage): step 2/3. In terms of biological role, catalyzes the hydrolysis of 6-phosphogluconolactone to 6-phosphogluconate. The protein is 6-phosphogluconolactonase of Buchnera aphidicola subsp. Acyrthosiphon pisum (strain Tuc7).